We begin with the raw amino-acid sequence, 297 residues long: Elongation factor Ts (297 aa).

The involved in Mg(2+) ion dislocation from EF-Tu stretch occupies residues 82 to 85; it reads TDFV.

This sequence belongs to the EF-Ts family.

It localises to the cytoplasm. Associates with the EF-Tu.GDP complex and induces the exchange of GDP to GTP. It remains bound to the aminoacyl-tRNA.EF-Tu.GTP complex up to the GTP hydrolysis stage on the ribosome. The protein is Elongation factor Ts of Azoarcus sp. (strain BH72).